Consider the following 259-residue polypeptide: Haloacid dehalogenase-like hydrolase domain-containing protein 2 (259 aa).

Positions 13 and 15 each coordinate Mg(2+). Residues 13-15 (DLS) and 46-47 (TN) contribute to the substrate site. Positions 49–71 (TKESKRDLLERLRKLEFDISEEE) form a coiled coil. The residue at position 50 (K50) is an N6-succinyllysine. K179 is a substrate binding site. D204 contacts Mg(2+).

It belongs to the HAD-like hydrolase superfamily. Mg(2+) serves as cofactor.

The chain is Haloacid dehalogenase-like hydrolase domain-containing protein 2 (Hdhd2) from Rattus norvegicus (Rat).